Reading from the N-terminus, the 1479-residue chain is Type VII secretion system protein EssC (1479 aa).

The interval M1–E189 is required for substrate secretion, protein missing this segment is unstable. Residues M1–N229 lie on the Cytoplasmic side of the membrane. Residues T230–V252 form a helical membrane-spanning segment. The Extracellular portion of the chain corresponds to R253–G256. A helical membrane pass occupies residues I257 to S279. Residues E280–K1479 lie on the Cytoplasmic side of the membrane. 2 consecutive FtsK domains span residues D652–N846 and Q997–S1183. Residues G672–S679 and G1014–T1021 contribute to the ATP site. The required for substrate secretion, truncated protein is stable stretch occupies residues M1249 to K1479.

The protein belongs to the EssC family. In terms of assembly, homooligomer. Interacts with EsaE.

The protein localises to the cell membrane. Functionally, component of the type VII secretion system (Ess). Required for the secretion of substrates including EsxA and EsxB. However, unable to support secretion of the substrate protein EsxC. The protein is Type VII secretion system protein EssC of Staphylococcus aureus (strain NCTC 8325 / PS 47).